A 369-amino-acid chain; its full sequence is Anhydro-N-acetylmuramic acid kinase (369 aa).

ATP is bound at residue 12–19; it reads GTSLDGVD.

The protein belongs to the anhydro-N-acetylmuramic acid kinase family.

It catalyses the reaction 1,6-anhydro-N-acetyl-beta-muramate + ATP + H2O = N-acetyl-D-muramate 6-phosphate + ADP + H(+). The protein operates within amino-sugar metabolism; 1,6-anhydro-N-acetylmuramate degradation. It functions in the pathway cell wall biogenesis; peptidoglycan recycling. Its function is as follows. Catalyzes the specific phosphorylation of 1,6-anhydro-N-acetylmuramic acid (anhMurNAc) with the simultaneous cleavage of the 1,6-anhydro ring, generating MurNAc-6-P. Is required for the utilization of anhMurNAc either imported from the medium or derived from its own cell wall murein, and thus plays a role in cell wall recycling. In Shigella flexneri serotype 5b (strain 8401), this protein is Anhydro-N-acetylmuramic acid kinase.